A 328-amino-acid polypeptide reads, in one-letter code: MIEKIWSGESPLWRLLLPLSWLYGLVSGAIRLCYKLKLKRAWRAPVPVVVVGNLTAGGNGKTPVVVWLVEQLQQRGIRVGVVSRGYGGKAESYPLLLSADTTTAQAGDEPVLIYQRTDAPVAVSPVRSDAVKAILAQHPDVQIIVTDDGLQHYRLARNVEIVVIDGVRRFGNGWWLPAGPMRERAGRLKSVDAVIVNGGVPRSGEIPMHLLPGQAVNLRTGTRCDVAQLEHVVAMAGIGHPPRFFATLKMCGVQPEKCVPLADHQSLNHADVSALVSAGQTLVMTEKDAVKCRAFAEENWWYLPVDAQLSGDEPAKLLTQLTLLASGN.

55–62 (TAGGNGKT) contacts ATP.

This sequence belongs to the LpxK family.

The catalysed reaction is a lipid A disaccharide + ATP = a lipid IVA + ADP + H(+). Its pathway is glycolipid biosynthesis; lipid IV(A) biosynthesis; lipid IV(A) from (3R)-3-hydroxytetradecanoyl-[acyl-carrier-protein] and UDP-N-acetyl-alpha-D-glucosamine: step 6/6. Its function is as follows. Transfers the gamma-phosphate of ATP to the 4'-position of a tetraacyldisaccharide 1-phosphate intermediate (termed DS-1-P) to form tetraacyldisaccharide 1,4'-bis-phosphate (lipid IVA). The protein is Tetraacyldisaccharide 4'-kinase of Escherichia coli (strain K12 / MC4100 / BW2952).